Consider the following 217-residue polypeptide: 2-C-methyl-D-erythritol 4-phosphate cytidylyltransferase (217 aa).

The protein belongs to the IspD/TarI cytidylyltransferase family. IspD subfamily.

The enzyme catalyses 2-C-methyl-D-erythritol 4-phosphate + CTP + H(+) = 4-CDP-2-C-methyl-D-erythritol + diphosphate. It participates in isoprenoid biosynthesis; isopentenyl diphosphate biosynthesis via DXP pathway; isopentenyl diphosphate from 1-deoxy-D-xylulose 5-phosphate: step 2/6. Functionally, catalyzes the formation of 4-diphosphocytidyl-2-C-methyl-D-erythritol from CTP and 2-C-methyl-D-erythritol 4-phosphate (MEP). This is 2-C-methyl-D-erythritol 4-phosphate cytidylyltransferase from Chlamydia abortus (strain DSM 27085 / S26/3) (Chlamydophila abortus).